The following is a 735-amino-acid chain: Protein STRUBBELIG-RECEPTOR FAMILY 2 (735 aa).

Positions 1-23 (MKTKQQLRFLATILLTTILFVLA) are cleaved as a signal peptide. The Extracellular portion of the chain corresponds to 24-297 (KTDTDPLEVL…KKKKKGIGAG (274 aa)). LRR repeat units lie at residues 78 to 94 (LREL…LQHL), 96 to 119 (NLKI…PPNA), 120 to 140 (THIN…LPLM), 142 to 163 (SLQS…VFSG), 165 to 187 (QIKE…FGTL), 189 to 211 (NLTS…ADLP), 212 to 232 (LADL…HFQS), and 233 to 253 (IPHL…KPWK). N-linked (GlcNAc...) asparagine glycosylation is found at Asn-118, Asn-128, Asn-147, Asn-175, and Asn-189. The N-linked (GlcNAc...) asparagine glycan is linked to Asn-264. A helical transmembrane segment spans residues 298 to 318 (STFLLVGGLALLGTFFALFAV). Over 319-735 (RMNHRRAQNL…SSPTFSYLSS (417 aa)) the chain is Cytoplasmic. Positions 358–378 (PQIKRFQPPPAPQLRHLPSPP) are disordered. The Protein kinase domain maps to 415-695 (FSEENLLGEG…EIVEALTALI (281 aa)).

Belongs to the protein kinase superfamily. Ser/Thr protein kinase family. Expressed in seedlings, roots, stems, leaves, flowers and siliques.

The protein localises to the membrane. The protein is Protein STRUBBELIG-RECEPTOR FAMILY 2 (SRF2) of Arabidopsis thaliana (Mouse-ear cress).